Here is a 1838-residue protein sequence, read N- to C-terminus: Lysine-specific demethylase 5 (1838 aa).

The segment at 1–150 (MSAKTEADNT…SSNKFDQGKN (150 aa)) is disordered. Residues 15–31 (SGGGGVGSGTSSGGGAS) show a composition bias toward gly residues. Over residues 45–56 (RNSTGNGTNSGS) the composition is skewed to low complexity. Polar residues predominate over residues 136 to 145 (HTQPHSSNKF). The 42-residue stretch at 161–202 (CPVFRPTTEEFKNPLAYISKIRSIAEKCGIAKILPPATWSPP) folds into the JmjN domain. The 91-residue stretch at 226–316 (TRVKLNFLDQ…ILHPFEVYTS (91 aa)) folds into the ARID domain. Residues 321–333 (GPTPTSSGSGSTP) are compositionally biased toward low complexity. Disordered stretches follow at residues 321-380 (GPTP…GLSG) and 416-437 (GSPLATGTTANTRGASQKKGGE). At Thr323 the chain carries Phosphothreonine. Composition is skewed to polar residues over residues 351–361 (TRQQIAPPNET), 369–380 (FGNSNASCGLSG), and 416–430 (GSPLATGTTANTRGA). The PHD-type 1 zinc finger occupies 448–498 (KYICHICNRGDVEESMLLCDGCDDSYHTFCLLPPLTSIPKGEWLCPRCVVE). Positions 591-757 (EYAESSWNLN…MGRECVNHYS (167 aa)) constitute a JmjC domain. Fe cation-binding residues include His637, Asp640, and His725. Residues 960 to 1049 (VRTRSDHNQE…LRIELQQLDL (90 aa)) are a coiled coil. The segment at 1293-1354 (DMFCLCKSEF…KWLCPSCVRS (62 aa)) adopts a PHD-type 2 zinc-finger fold. The disordered stretch occupies residues 1401–1462 (SSPDVSAAQE…SDADDDDDED (62 aa)). Low complexity predominate over residues 1407–1417 (AAQEAIMAQQQ). A phosphoserine mark is found at Ser1422 and Ser1433. Acidic residues predominate over residues 1453–1462 (SDADDDDDED). Phosphoserine is present on Ser1474. The tract at residues 1548 to 1751 (YMQRQRQQHT…QRSQQAAQED (204 aa)) is disordered. Composition is skewed to low complexity over residues 1576–1595 (NSPNSNSNSGGATGSASNSG), 1624–1650 (GKKGSAAAARKSDAKASPAASTTPGAD), 1658–1667 (ANGGNTNSST), 1674–1683 (SATTTPTPGS), and 1692–1736 (STTA…ATGG). Phosphoserine is present on residues Ser1635 and Ser1640. The PHD-type 3 zinc-finger motif lies at 1753–1808 (EEECRAENCHKPTGREVDWVQCDGGCNEWFHMYCVGLNRSQIKPDDDYICIRCTKT). The tract at residues 1814 to 1838 (QGSGHSMSVASTTTPGKQRAVQSAR) is disordered.

Belongs to the JARID1 histone demethylase family. In terms of assembly, interacts with Myc. Part of a complex containing Lid, Myc and Ash2. It depends on Fe(2+) as a cofactor.

The protein resides in the nucleus. The catalysed reaction is N(6),N(6),N(6)-trimethyl-L-lysyl(4)-[histone H3] + 3 2-oxoglutarate + 3 O2 = L-lysyl(4)-[histone H3] + 3 formaldehyde + 3 succinate + 3 CO2. Its activity is regulated as follows. Inhibited by Myc. In terms of biological role, histone demethylase that specifically demethylates 'Lys-4' of histone H3, thereby playing a central role in histone code. Does not demethylate histone H3 'Lys-9', H3 'Lys-27', H3 'Lys-36', H3 'Lys-79' or H4 'Lys-20'. Specifically demethylates trimethylated H3 'Lys-4'. Required for the correct regulation of homeotic genes during development. Plays a role in the regulation of the circadian rhythm and in maintaining the normal periodicity of the circadian clock. Regulates the expression of clock-controlled genes including tim, per and cry. In Drosophila melanogaster (Fruit fly), this protein is Lysine-specific demethylase 5.